Consider the following 495-residue polypeptide: Meiosis-specific nuclear structural protein 1 (495 aa).

Residues 1–314 (MGSKRRNLSC…KLEEMLRQRE (314 aa)) are interaction with BBOF1. Positions 28-410 (VQALKNVNSQ…QLEHRRAVEK (383 aa)) form a coiled coil. Tyr188 is modified (phosphotyrosine).

The protein belongs to the MNS1 family. In terms of assembly, able to form oligomers. Microtubule inner protein component of sperm flagellar doublet microtubules. Interacts with ODAD1. Interacts with BBOF1. Expressed in nasal respiratory epithelium and in the sperm.

The protein resides in the nucleus. It is found in the cytoplasm. It localises to the cytoskeleton. The protein localises to the cilium axoneme. Its subcellular location is the flagellum axoneme. In terms of biological role, microtubule inner protein (MIP) part of the dynein-decorated doublet microtubules (DMTs) in cilia axoneme, which is required for motile cilia beating. May play a role in the control of meiotic division and germ cell differentiation through regulation of pairing and recombination during meiosis. Required for sperm flagella assembly. May play a role in the assembly and function of the outer dynein arm-docking complex (ODA-DC). ODA-DC mediates outer dynein arms (ODA) binding onto the axonemal doublet microtubules. This is Meiosis-specific nuclear structural protein 1 from Homo sapiens (Human).